A 156-amino-acid chain; its full sequence is Probable succinate transporter subunit YjjB (156 aa).

4 helical membrane passes run Trp7–Phe27, Phe54–Ile74, Val86–Ile106, and Phe128–Trp148.

The protein belongs to the ThrE exporter (TC 2.A.79) family. The transporter is composed of YjjB and YjjP.

It localises to the cell inner membrane. Functionally, involved in succinate export with YjjP. Both proteins are required for export. The sequence is that of Probable succinate transporter subunit YjjB from Yersinia enterocolitica serotype O:8 / biotype 1B (strain NCTC 13174 / 8081).